We begin with the raw amino-acid sequence, 160 residues long: Protein max (160 aa).

Acidic residues predominate over residues methionine 1–glutamate 13. The segment at methionine 1–lysine 40 is disordered. Serine 2 bears the N-acetylserine mark. 2 positions are modified to phosphoserine: serine 2 and serine 11. Positions aspartate 23 to methionine 74 constitute a bHLH domain. The segment covering asparagine 29–lysine 40 has biased composition (basic and acidic residues). The residue at position 66 (lysine 66) is an N6-acetyllysine. Residues histidine 81–leucine 102 are leucine-zipper. The segment at lysine 104–serine 160 is disordered. The residue at position 107 (serine 107) is a Phosphoserine. Residues serine 107–threonine 124 are compositionally biased toward polar residues. 2 positions are modified to N6-acetyllysine: lysine 153 and lysine 154.

Belongs to the MAX family. In terms of assembly, efficient DNA binding requires dimerization with another bHLH protein. Binds DNA as a heterodimer with MYC or MAD. Part of the E2F6.com-1 complex in G0 phase composed of E2F6, MGA, MAX, TFDP1, CBX3, BAT8, EUHMTASE1, RING1, RNF2, MBLR, L3MBTL2 and YAF2. Component of some MLL1/MLL complex, at least composed of the core components KMT2A/MLL1, ASH2L, HCFC1/HCF1, WDR5 and RBBP5, as well as the facultative components BACC1, CHD8, E2F6, HSP70, INO80C, KANSL1, LAS1L, MAX, MCRS1, MGA, MYST1/MOF, PELP1, PHF20, PRP31, RING2, RUVB1/TIP49A, RUVB2/TIP49B, SENP3, TAF1, TAF4, TAF6, TAF7, TAF9 and TEX10. Interacts with SPAG9. The heterodimer MYC:MAX interacts with ABI1; the interaction may enhance MYC:MAX transcriptional activity. Phosphorylated.

The protein resides in the nucleus. It is found in the cell projection. The protein localises to the dendrite. Its function is as follows. Transcription regulator. Forms a sequence-specific DNA-binding protein complex with MYC or MAD which recognizes the core sequence 5'-CAC[GA]TG-3'. The MYC:MAX complex is a transcriptional activator, whereas the MAD:MAX complex is a repressor. CpG methylation of the recognition site greatly inhibits DNA binding, suggesting that DNA methylation may regulate the MYC:MAX complex in vivo. May repress transcription via the recruitment of a chromatin remodeling complex containing H3 'Lys-9' histone methyltransferase activity. Represses MYC transcriptional activity from E-box elements. In Mus musculus (Mouse), this protein is Protein max.